The chain runs to 438 residues: Enolase (438 aa).

The substrate site is built by H159 and E168. Residue E211 is the Proton donor of the active site. D246, E297, and D322 together coordinate Mg(2+). Substrate-binding residues include E297 and D322. K347 serves as the catalytic Proton acceptor. Residues S374–S377 and K398 each bind substrate.

It belongs to the enolase family. Homodimer. It depends on Mg(2+) as a cofactor.

The protein resides in the cytoplasm. The catalysed reaction is (2R)-2-phosphoglycerate = phosphoenolpyruvate + H2O. Its pathway is carbohydrate degradation; glycolysis; pyruvate from D-glyceraldehyde 3-phosphate: step 4/5. The sequence is that of Enolase (enoA) from Penicillium chrysogenum (Penicillium notatum).